The sequence spans 284 residues: Bifunctional protein FolD (284 aa).

NADP(+) is bound by residues 166–168 (GAS) and I232.

This sequence belongs to the tetrahydrofolate dehydrogenase/cyclohydrolase family. In terms of assembly, homodimer.

The catalysed reaction is (6R)-5,10-methylene-5,6,7,8-tetrahydrofolate + NADP(+) = (6R)-5,10-methenyltetrahydrofolate + NADPH. It carries out the reaction (6R)-5,10-methenyltetrahydrofolate + H2O = (6R)-10-formyltetrahydrofolate + H(+). The protein operates within one-carbon metabolism; tetrahydrofolate interconversion. Catalyzes the oxidation of 5,10-methylenetetrahydrofolate to 5,10-methenyltetrahydrofolate and then the hydrolysis of 5,10-methenyltetrahydrofolate to 10-formyltetrahydrofolate. The polypeptide is Bifunctional protein FolD (Pseudomonas fluorescens (strain ATCC BAA-477 / NRRL B-23932 / Pf-5)).